The sequence spans 302 residues: N-acetyl-D-glucosamine kinase (302 aa).

ATP contacts are provided by residues 4–11 and 133–140; these read GFDVGGTK and GFGGGLVF. Residues His157, Cys177, Cys179, and Cys184 each contribute to the Zn(2+) site.

The protein belongs to the ROK (NagC/XylR) family. NagK subfamily.

It catalyses the reaction N-acetyl-D-glucosamine + ATP = N-acetyl-D-glucosamine 6-phosphate + ADP + H(+). The protein operates within cell wall biogenesis; peptidoglycan recycling. Its function is as follows. Catalyzes the phosphorylation of N-acetyl-D-glucosamine (GlcNAc) derived from cell-wall degradation, yielding GlcNAc-6-P. This Aliivibrio salmonicida (strain LFI1238) (Vibrio salmonicida (strain LFI1238)) protein is N-acetyl-D-glucosamine kinase.